The following is a 579-amino-acid chain: Mitochondrial distribution and morphology protein 31 (579 aa).

Residues 1–47 (MSLFTRPFLRSPRQFSVARYVYWARSPALRSNLRIPSIAAASLRAYS) constitute a mitochondrion transit peptide. At 48–114 (NESKTGRDAP…SDDISAFISW (67 aa)) the chain is on the mitochondrial matrix side. The chain crosses the membrane as a helical span at residues 115-135 (ILVSNIFIFIFWTTTFVSLIL). Residues 136–558 (YLINTVFAQE…DEKRTLRLRR (423 aa)) are Mitochondrial intermembrane-facing. A helical membrane pass occupies residues 559–578 (VGFWSLQLILQVILMSLGAI). Residue alanine 579 is a topological domain, mitochondrial matrix.

The protein belongs to the MDM31/MDM32 family. As to quaternary structure, interacts with MDM32. Participates in a complex of about 600 kDa.

It localises to the mitochondrion inner membrane. In terms of biological role, involved in the organization of the mitochondrial membranes and the global structure of the mitochondria. Also required for mitochondrial distribution and mobility as well as for the maintenance of mitochondrial DNA nucleoids structures. This is Mitochondrial distribution and morphology protein 31 (MDM31) from Saccharomyces cerevisiae (strain ATCC 204508 / S288c) (Baker's yeast).